The chain runs to 598 residues: Elongation factor 4 (598 aa).

A tr-type G domain is found at 4-186; sequence SHIRNFSIIA…VIVNKIPPPE (183 aa). GTP is bound by residues 16-21 and 133-136; these read DHGKST and NKID.

This sequence belongs to the TRAFAC class translation factor GTPase superfamily. Classic translation factor GTPase family. LepA subfamily.

The protein resides in the cell inner membrane. It catalyses the reaction GTP + H2O = GDP + phosphate + H(+). In terms of biological role, required for accurate and efficient protein synthesis under certain stress conditions. May act as a fidelity factor of the translation reaction, by catalyzing a one-codon backward translocation of tRNAs on improperly translocated ribosomes. Back-translocation proceeds from a post-translocation (POST) complex to a pre-translocation (PRE) complex, thus giving elongation factor G a second chance to translocate the tRNAs correctly. Binds to ribosomes in a GTP-dependent manner. This is Elongation factor 4 from Alteromonas mediterranea (strain DSM 17117 / CIP 110805 / LMG 28347 / Deep ecotype).